The following is a 109-amino-acid chain: Cytochrome bo(3) ubiquinol oxidase subunit 4 (109 aa).

The Cytoplasmic portion of the chain corresponds to 1–17 (MSHSTDHSGASHGSVKT). Residues 18–36 (YMTGFILSIILTVIPFWMV) traverse the membrane as a helical segment. The Periplasmic portion of the chain corresponds to 37–45 (MTGAASPAV). Residues 46–64 (ILGTILAMAVVQVLVHLVC) form a helical membrane-spanning segment. Over 65-80 (FLHMNTKSDEGWNMTA) the chain is Cytoplasmic. The chain crosses the membrane as a helical span at residues 81–99 (FVFTVLIIAILVVGSIWIM). Over 100 to 109 (WNLNYNMMMH) the chain is Periplasmic.

The protein belongs to the cytochrome c oxidase bacterial subunit 4 family. Heterooctamer of two A chains, two B chains, two C chains and two D chains.

The protein resides in the cell inner membrane. In terms of biological role, cytochrome bo(3) ubiquinol terminal oxidase is the component of the aerobic respiratory chain of E.coli that predominates when cells are grown at high aeration. Has proton pump activity across the membrane in addition to electron transfer, pumping 2 protons/electron. The polypeptide is Cytochrome bo(3) ubiquinol oxidase subunit 4 (cyoD) (Escherichia coli O157:H7).